The chain runs to 252 residues: Fructose-1,6-bisphosphatase/inositol-1-monophosphatase (252 aa).

Residues D38, T40, E67, D82, L84, and D85 each coordinate Mg(2+). Substrate contacts are provided by residues 85–87 (DGT), R167, A172, and R191. D200 serves as a coordination point for Mg(2+).

This sequence belongs to the inositol monophosphatase superfamily. FBPase class 4 family. In terms of assembly, homodimer. Mg(2+) serves as cofactor. The cofactor is Mn(2+).

It carries out the reaction beta-D-fructose 1,6-bisphosphate + H2O = beta-D-fructose 6-phosphate + phosphate. The catalysed reaction is a myo-inositol phosphate + H2O = myo-inositol + phosphate. With respect to regulation, both FBPase and IMPase activities are inhibited by Ca(2+). In contrast to mammalian I-1-P phosphatases, is only very weakly inhibited by Li(+) (with an IC(50) of about 290 mM). Its function is as follows. Phosphatase with broad specificity; it can dephosphorylate fructose 1,6-bisphosphate, both D and L isomers of inositol-1-phosphate (I-1-P), 2'-AMP, pNPP, inositol-2-phosphate, beta-glycerol phosphate, and alpha-D-glucose-1-phosphate. Cannot hydrolyze glucose-6-phosphate and fructose-6-phosphate. May be involved in the biosynthesis of a unique osmolyte, di-myo-inositol 1,1-phosphate. The sequence is that of Fructose-1,6-bisphosphatase/inositol-1-monophosphatase (suhB) from Archaeoglobus fulgidus (strain ATCC 49558 / DSM 4304 / JCM 9628 / NBRC 100126 / VC-16).